Here is a 226-residue protein sequence, read N- to C-terminus: Enolase-phosphatase E1 (226 aa).

The protein belongs to the HAD-like hydrolase superfamily. MasA/MtnC family. As to quaternary structure, monomer. Mg(2+) is required as a cofactor.

The catalysed reaction is 5-methylsulfanyl-2,3-dioxopentyl phosphate + H2O = 1,2-dihydroxy-5-(methylsulfanyl)pent-1-en-3-one + phosphate. The protein operates within amino-acid biosynthesis; L-methionine biosynthesis via salvage pathway; L-methionine from S-methyl-5-thio-alpha-D-ribose 1-phosphate: step 3/6. It functions in the pathway amino-acid biosynthesis; L-methionine biosynthesis via salvage pathway; L-methionine from S-methyl-5-thio-alpha-D-ribose 1-phosphate: step 4/6. Functionally, bifunctional enzyme that catalyzes the enolization of 2,3-diketo-5-methylthiopentyl-1-phosphate (DK-MTP-1-P) into the intermediate 2-hydroxy-3-keto-5-methylthiopentenyl-1-phosphate (HK-MTPenyl-1-P), which is then dephosphorylated to form the acireductone 1,2-dihydroxy-3-keto-5-methylthiopentene (DHK-MTPene). This is Enolase-phosphatase E1 from Shewanella oneidensis (strain ATCC 700550 / JCM 31522 / CIP 106686 / LMG 19005 / NCIMB 14063 / MR-1).